The primary structure comprises 683 residues: Tripartite terminase subunit 3 (683 aa).

Residues 217–224 (IPRRHGKT) carry the Walker A motif motif. The Walker B motif signature appears at 312–317 (LLYIDE). Catalysis depends on Glu-317, which acts as the For ATPase activity. Catalysis depends on for nuclease activity residues Asp-472, Glu-546, and Asp-658.

The protein belongs to the herpesviridae TRM3 protein family. Interacts with the terminase subunits TRM1 and TRM2. Interacts with portal protein.

It localises to the host nucleus. Functionally, component of the molecular motor that translocates viral genomic DNA in empty capsid during DNA packaging. Forms a tripartite terminase complex together with TRM1 and TRM2 in the host cytoplasm. Once the complex reaches the host nucleus, it interacts with the capsid portal vertex. This portal forms a ring in which genomic DNA is translocated into the capsid. TRM3 carries an RNase H-like nuclease activity that plays an important role for the cleavage of concatemeric viral DNA into unit length genomes. This chain is Tripartite terminase subunit 3, found in Saimiri sciureus (Common squirrel monkey).